The following is a 407-amino-acid chain: Putative two-component response regulator ARR19 (407 aa).

A Response regulatory domain is found at Asn-35–Val-150. Residue Asp-86 is modified to 4-aspartylphosphate. A Nuclear localization signal motif is present at residues Arg-214–Arg-217. The myb-like GARP DNA-binding region spans Arg-217–Arg-271.

It belongs to the ARR family. Type-B subfamily. As to quaternary structure, binds the target DNA as a monomer. Post-translationally, two-component system major event consists of a His-to-Asp phosphorelay between a sensor histidine kinase (HK) and a response regulator (RR). In plants, the His-to-Asp phosphorelay involves an additional intermediate named Histidine-containing phosphotransfer protein (HPt). This multistep phosphorelay consists of a His-Asp-His-Asp sequential transfer of a phosphate group between first a His and an Asp of the HK protein, followed by the transfer to a conserved His of the HPt protein and finally the transfer to an Asp in the receiver domain of the RR protein. Detected in trichomes and siliques.

The protein resides in the nucleus. Functionally, putative transcriptional activator that binds specifically to the DNA sequence 5'-[AG]GATT-3'. Functions as a response regulator involved in His-to-Asp phosphorelay signal transduction system. Phosphorylation of the Asp residue in the receiver domain activates the ability of the protein to promote the transcription of target genes. Could directly activate some type-A response regulators in response to cytokinins. This chain is Putative two-component response regulator ARR19 (ARR19), found in Arabidopsis thaliana (Mouse-ear cress).